Reading from the N-terminus, the 144-residue chain is uncharacterized protein (144 aa).

The segment covering 124-133 (KALNRKKSKT) has biased composition (basic residues). The tract at residues 124–144 (KALNRKKSKTKNGEKNGEGKS) is disordered. Positions 134 to 144 (KNGEKNGEGKS) are enriched in basic and acidic residues.

This is an uncharacterized protein from Acidianus filamentous virus 1 (isolate United States/Yellowstone) (AFV-1).